An 847-amino-acid chain; its full sequence is Alanine--tRNA ligase (847 aa).

Residues H554, H558, C656, and H660 each contribute to the Zn(2+) site.

It belongs to the class-II aminoacyl-tRNA synthetase family. The cofactor is Zn(2+).

The protein localises to the cytoplasm. It carries out the reaction tRNA(Ala) + L-alanine + ATP = L-alanyl-tRNA(Ala) + AMP + diphosphate. Catalyzes the attachment of alanine to tRNA(Ala) in a two-step reaction: alanine is first activated by ATP to form Ala-AMP and then transferred to the acceptor end of tRNA(Ala). Also edits incorrectly charged Ser-tRNA(Ala) and Gly-tRNA(Ala) via its editing domain. This chain is Alanine--tRNA ligase, found in Helicobacter pylori (strain ATCC 700392 / 26695) (Campylobacter pylori).